The primary structure comprises 568 residues: Lariat debranching enzyme (568 aa).

A divalent metal cation is bound by residues Cys-8, His-10, Asp-39, and Asn-84. The segment at 124 to 154 is lariat recognition loop; it reads SGIFKSHDFKKGHFEFPPYNPETLRSVYHIR. Residues His-174, His-226, and His-228 each coordinate a divalent metal cation. The segment at 388 to 568 is disordered; that stretch reads IYGERGGKGA…TAVEDEESDS (181 aa). Polar residues predominate over residues 417-428; it reads PSDTSGLSSSYN. Residues 432 to 444 are compositionally biased toward acidic residues; sequence ITIEDEWEEEEDG. Basic and acidic residues predominate over residues 467–480; sequence DSDRDSSPQRETAK. Position 478 is a phosphothreonine (Thr-478). The segment covering 534–549 has biased composition (low complexity); sequence GETTQSSAGQTGGTPQ. Phosphoserine is present on Ser-568.

This sequence belongs to the lariat debranching enzyme family. Fe(2+) serves as cofactor. Zn(2+) is required as a cofactor. It depends on Mn(2+) as a cofactor.

The protein resides in the nucleus. Active in presence of diverse metals including Fe(2+), Zn(2+), Mn(2+). Also activated by Ca(2+). Binds two metal cations in two adjacent alpha and beta metal-binding pockets. In terms of biological role, cleaves the 2'-5' phosphodiester linkage at the branch point of excised lariat intron RNA and converts them into linear molecules that can be subsequently degraded, thereby facilitating ribonucleotide turnover. Linked to its role in pre-mRNA processing mechanism, may also participate in retrovirus replication and have an antiviral cell-intrinsic defense function. The chain is Lariat debranching enzyme (dbr1) from Danio rerio (Zebrafish).